Reading from the N-terminus, the 192-residue chain is Phage-like element PBSX protein XkdU (192 aa).

The protein to B.subtilis YqcA.

The sequence is that of Phage-like element PBSX protein XkdU (xkdU) from Bacillus subtilis (strain 168).